An 80-amino-acid polypeptide reads, in one-letter code: uncharacterized protein (80 aa).

The first 15 residues, 1–15 (MVKLSFTLRFGDVWV), serve as a signal peptide directing secretion.

This is an uncharacterized protein from Archaeoglobus fulgidus (strain ATCC 49558 / DSM 4304 / JCM 9628 / NBRC 100126 / VC-16).